A 188-amino-acid polypeptide reads, in one-letter code: GTPase KRas (188 aa).

GTP contacts are provided by residues 10–18 (GAGGVGKSA), 29–35 (VDEYDPT), 59–60 (AG), and 116–119 (NKCD). The Effector region signature appears at 32 to 40 (YDPTIEDSY). The disordered stretch occupies residues 168-188 (EKMSKDGKKKKKKTKTKCIIM). The residue at position 185 (cysteine 185) is a Cysteine methyl ester. Cysteine 185 is lipidated: S-farnesyl cysteine. Positions 186 to 188 (IIM) are cleaved as a propeptide — removed in mature form.

This sequence belongs to the small GTPase superfamily. Ras family.

It is found in the cell membrane. The protein localises to the cytoplasm. It carries out the reaction GTP + H2O = GDP + phosphate + H(+). Its activity is regulated as follows. Alternates between an inactive form bound to GDP and an active form bound to GTP. Activated by a guanine nucleotide-exchange factor (GEF) and inactivated by a GTPase-activating protein (GAP). Ras proteins bind GDP/GTP and possess intrinsic GTPase activity. Plays an important role in the regulation of cell proliferation. May play a role in promoting oncogenic events by inducing transcriptional silencing of tumor suppressor genes (TSGs). In Meleagris gallopavo (Wild turkey), this protein is GTPase KRas (KRAS).